The chain runs to 443 residues: tRNA (guanine-N(7)-)-methyltransferase non-catalytic subunit TRM82 (443 aa).

The tract at residues 67–93 (ASKKLKTNDGEPVAQPKKQAKVPKPGP) is disordered. WD repeat units lie at residues 97 to 137 (PVYQ…KDNI), 193 to 235 (GHVS…IVDK), and 239 to 279 (GHEE…LLFK).

It belongs to the WD repeat TRM82 family. In terms of assembly, forms a heterodimer with the catalytic subunit TRM8.

The protein localises to the nucleus. It functions in the pathway tRNA modification; N(7)-methylguanine-tRNA biosynthesis. In terms of biological role, required for the formation of N(7)-methylguanine at position 46 (m7G46) in tRNA. In the complex, it is required to stabilize and induce conformational changes of the catalytic subunit. In Kluyveromyces lactis (strain ATCC 8585 / CBS 2359 / DSM 70799 / NBRC 1267 / NRRL Y-1140 / WM37) (Yeast), this protein is tRNA (guanine-N(7)-)-methyltransferase non-catalytic subunit TRM82.